A 149-amino-acid chain; its full sequence is MKVVLTKDVEGWGTIGDVIEVKKGFARNYLIPRGLALELTEENKRFIDNILAQKARKLQREKEKAFELAKKLNGVEIEIERPIGVTGKMYGSVTTSDITEKLKEKELEVDKKKIMLRSPIRNLGSYNIQVKLHPEVSATIKVHVVPESK.

This sequence belongs to the bacterial ribosomal protein bL9 family.

In terms of biological role, binds to the 23S rRNA. This is Large ribosomal subunit protein bL9 from Sulfurihydrogenibium sp. (strain YO3AOP1).